The primary structure comprises 156 residues: Small ribosomal subunit protein uS7 (156 aa).

The protein belongs to the universal ribosomal protein uS7 family. Part of the 30S ribosomal subunit. Contacts proteins S9 and S11.

One of the primary rRNA binding proteins, it binds directly to 16S rRNA where it nucleates assembly of the head domain of the 30S subunit. Is located at the subunit interface close to the decoding center, probably blocks exit of the E-site tRNA. This chain is Small ribosomal subunit protein uS7, found in Prochlorococcus marinus (strain SARG / CCMP1375 / SS120).